Here is a 251-residue protein sequence, read N- to C-terminus: Tyrosine phosphatase-like protein J3 (251 aa).

Positions 26-251 (IADEYYTIVP…PVLQNSKRRE (226 aa)) constitute a Tyrosine-protein phosphatase domain.

This sequence belongs to the protein-tyrosine phosphatase family.

The polypeptide is Tyrosine phosphatase-like protein J3 (J4) (Microplitis demolitor (Parasitoid wasp)).